The primary structure comprises 550 residues: Chaperonin GroEL (550 aa).

ATP contacts are provided by residues 30-33, Lys51, 87-91, Gly414, and Asp494; these read TLGP and DGTTT.

Belongs to the chaperonin (HSP60) family. In terms of assembly, forms a cylinder of 14 subunits composed of two heptameric rings stacked back-to-back. Interacts with the co-chaperonin GroES.

It localises to the cytoplasm. It carries out the reaction ATP + H2O + a folded polypeptide = ADP + phosphate + an unfolded polypeptide.. Functionally, together with its co-chaperonin GroES, plays an essential role in assisting protein folding. The GroEL-GroES system forms a nano-cage that allows encapsulation of the non-native substrate proteins and provides a physical environment optimized to promote and accelerate protein folding. This chain is Chaperonin GroEL, found in Buchnera aphidicola subsp. Thelaxes suberi.